The following is a 254-amino-acid chain: Mantle protein (254 aa).

An N-terminal signal peptide occupies residues 1–16; sequence MLAVLLFAALVATAYS.

Prismatic layer of shell (at protein level). Expressed primarily in the mantle with highest level in the outer epithelium of the mantle edge and lower level in the mantle pallium.

The protein resides in the secreted. The protein is Mantle protein of Margaritifera margaritifera (Freshwater pearl mussel).